Consider the following 294-residue polypeptide: Nucleoside-specific channel-forming protein Tsx (294 aa).

The N-terminal stretch at 1 to 22 is a signal peptide; the sequence is MKKTLLAAGAVLALSSSFTVNA.

The protein belongs to the nucleoside-specific channel-forming outer membrane porin (Tsx) (TC 1.B.10) family.

It localises to the cell outer membrane. Functions as a substrate-specific channel for nucleosides and deoxynucleosides. This Escherichia coli O157:H7 protein is Nucleoside-specific channel-forming protein Tsx (tsx).